The primary structure comprises 379 residues: MSAIRYELIKTDKQTGARLGKIHTPHGTFDTPMFMPVGTLATVKTMSPEELKAMGAGIILSNTYHLWLRPGEELIREAGGLHKFMNWDQPILTDSGGFQVFSLSKMRDIKEEGVHFRNHLNGDKLFLSPEKAIQIQNALGSDIMMSFDECPPYPASHEYMKKSVERTSRWAERGLKAHERPEDQGLFGIVQGGAYEDLRAQSAKDLVSLDFPGYSIGGLSVGEPKDVMNRVLEHTTPLLPANKPRYLMGVGSPDSLIDGVIRGVDMFDCVLPTRIARNGTCMTSSGRLVIKNAKFTHDFRPIDENCDCYTCKNYSRAYIRHLIRCEETFGIRLTTYHNLHFLLNLMKQVRSAIMEDRLADFREEFFEQYGFNRPDAKNF.

The active-site Proton acceptor is Asp-94. Residues 94-98 (DSGGF), Asp-148, Gln-191, and Gly-218 contribute to the substrate site. The segment at 249–255 (GVGSPDS) is RNA binding. Asp-268 serves as the catalytic Nucleophile. Positions 273 to 277 (TRIAR) are RNA binding; important for wobble base 34 recognition. Cys-306, Cys-308, Cys-311, and His-337 together coordinate Zn(2+).

This sequence belongs to the queuine tRNA-ribosyltransferase family. Homodimer. Within each dimer, one monomer is responsible for RNA recognition and catalysis, while the other monomer binds to the replacement base PreQ1. It depends on Zn(2+) as a cofactor.

It carries out the reaction 7-aminomethyl-7-carbaguanine + guanosine(34) in tRNA = 7-aminomethyl-7-carbaguanosine(34) in tRNA + guanine. Its pathway is tRNA modification; tRNA-queuosine biosynthesis. Functionally, catalyzes the base-exchange of a guanine (G) residue with the queuine precursor 7-aminomethyl-7-deazaguanine (PreQ1) at position 34 (anticodon wobble position) in tRNAs with GU(N) anticodons (tRNA-Asp, -Asn, -His and -Tyr). Catalysis occurs through a double-displacement mechanism. The nucleophile active site attacks the C1' of nucleotide 34 to detach the guanine base from the RNA, forming a covalent enzyme-RNA intermediate. The proton acceptor active site deprotonates the incoming PreQ1, allowing a nucleophilic attack on the C1' of the ribose to form the product. After dissociation, two additional enzymatic reactions on the tRNA convert PreQ1 to queuine (Q), resulting in the hypermodified nucleoside queuosine (7-(((4,5-cis-dihydroxy-2-cyclopenten-1-yl)amino)methyl)-7-deazaguanosine). The chain is Queuine tRNA-ribosyltransferase from Listeria innocua serovar 6a (strain ATCC BAA-680 / CLIP 11262).